A 372-amino-acid chain; its full sequence is 3-isopropylmalate dehydrogenase (372 aa).

79 to 90 (GPKWQGGAVRPE) contacts NAD(+). Residues arginine 97, arginine 107, arginine 136, and aspartate 225 each contribute to the substrate site. Residues aspartate 225, aspartate 250, and aspartate 254 each coordinate Mg(2+). 289–300 (GSAPDLPAGKAN) is an NAD(+) binding site.

It belongs to the isocitrate and isopropylmalate dehydrogenases family. Homodimer. Mg(2+) serves as cofactor. Requires Mn(2+) as cofactor.

The protein localises to the cytoplasm. It carries out the reaction (2R,3S)-3-isopropylmalate + NAD(+) = 4-methyl-2-oxopentanoate + CO2 + NADH. It functions in the pathway amino-acid biosynthesis; L-leucine biosynthesis; L-leucine from 3-methyl-2-oxobutanoate: step 3/4. Functionally, catalyzes the oxidation of 3-carboxy-2-hydroxy-4-methylpentanoate (3-isopropylmalate) to 3-carboxy-4-methyl-2-oxopentanoate. The product decarboxylates to 4-methyl-2 oxopentanoate. This chain is 3-isopropylmalate dehydrogenase (LEU2), found in Eremothecium gossypii (strain ATCC 10895 / CBS 109.51 / FGSC 9923 / NRRL Y-1056) (Yeast).